A 702-amino-acid chain; its full sequence is Polyribonucleotide nucleotidyltransferase (702 aa).

Residues Asp-487 and Asp-493 each coordinate Mg(2+). Residues 554–613 (PKILTMQINPDKIRDVIGPSGKQINKIIEETGVKIDIEQDGTIFISSVNEEMNKKAKKII) enclose the KH domain. The 69-residue stretch at 623-691 (GQVYLGKVKR…KQGRVNLSRK (69 aa)) folds into the S1 motif domain.

Belongs to the polyribonucleotide nucleotidyltransferase family. Mg(2+) serves as cofactor.

Its subcellular location is the cytoplasm. The enzyme catalyses RNA(n+1) + phosphate = RNA(n) + a ribonucleoside 5'-diphosphate. Its function is as follows. Involved in mRNA degradation. Catalyzes the phosphorolysis of single-stranded polyribonucleotides processively in the 3'- to 5'-direction. This chain is Polyribonucleotide nucleotidyltransferase, found in Anoxybacillus flavithermus (strain DSM 21510 / WK1).